The sequence spans 124 residues: Seripauperin-23 (124 aa).

Positions 1–20 are cleaved as a signal peptide; it reads MVKLTSIVAGVAAIAAGVAA.

It belongs to the SRP1/TIP1 family. Seripauperin subfamily. Post-translationally, O-glycosylated.

Its subcellular location is the secreted. It is found in the cell wall. Functionally, component of the cell wall. The sequence is that of Seripauperin-23 (PAU23) from Saccharomyces cerevisiae (strain ATCC 204508 / S288c) (Baker's yeast).